We begin with the raw amino-acid sequence, 36 residues long: Kappa-theraphotoxin-Aa1a (36 aa).

3 disulfide bridges follow: Cys3–Cys18, Cys10–Cys23, and Cys17–Cys30. Position 36 is an isoleucine amide (Ile36).

It belongs to the neurotoxin 10 (Hwtx-1) family. Expressed by the venom gland.

It is found in the secreted. Its function is as follows. Selective inhibitor of voltage-gated potassium channel Kv10.1/KCNH1/EAG1 (IC(50)=637 nM). It acts by shifting the voltage dependence of channel activation in a depolarising direction. It shows a 100% inhibition at saturating concentrations, shows fast on-rates and is reversible. It also slightly affects channel inactivation, when the membrane is highly depolarised (&gt;+80 mV). This Avicularia aurantiaca (Yellow-banded pinktoe tarantula) protein is Kappa-theraphotoxin-Aa1a.